A 422-amino-acid polypeptide reads, in one-letter code: 26S proteasome non-ATPase regulatory subunit 11 (422 aa).

The region spanning 224–392 (DWKTAYSYFY…GVLIIFDEPP (169 aa)) is the PCI domain.

The protein belongs to the proteasome subunit S9 family. In terms of assembly, component of the 19S proteasome regulatory particle complex. The 26S proteasome consists of a 20S core particle (CP) and two 19S regulatory subunits (RP). The regulatory particle is made of a lid composed of 9 subunits including PSMD11, a base containing 6 ATPases and few additional components.

It localises to the nucleus. The protein resides in the cytoplasm. Its subcellular location is the cytosol. Component of the 26S proteasome, a multiprotein complex involved in the ATP-dependent degradation of ubiquitinated proteins. This complex plays a key role in the maintenance of protein homeostasis by removing misfolded or damaged proteins, which could impair cellular functions, and by removing proteins whose functions are no longer required. Therefore, the proteasome participates in numerous cellular processes, including cell cycle progression, apoptosis, or DNA damage repair. In the complex, PSMD11 is required for proteasome assembly. Plays a key role in increased proteasome activity in embryonic stem cells (ESCs): its high expression in ESCs promotes enhanced assembly of the 26S proteasome, followed by higher proteasome activity. The chain is 26S proteasome non-ATPase regulatory subunit 11 (psmd11) from Xenopus tropicalis (Western clawed frog).